Reading from the N-terminus, the 436-residue chain is tRNA-2-methylthio-N(6)-dimethylallyladenosine synthase (436 aa).

Residues 5–121 (RKLFIKTYGC…LPDMLERTEG (117 aa)) enclose the MTTase N-terminal domain. Residues Cys14, Cys50, Cys84, Cys158, Cys162, and Cys165 each contribute to the [4Fe-4S] cluster site. The region spanning 144–374 (ATRGPAAFLT…TEQQRAAQMA (231 aa)) is the Radical SAM core domain. The TRAM domain occupies 373–435 (MAMVGREVGV…PNSLAGERLG (63 aa)).

Belongs to the methylthiotransferase family. MiaB subfamily. As to quaternary structure, monomer. [4Fe-4S] cluster is required as a cofactor.

It localises to the cytoplasm. The enzyme catalyses N(6)-dimethylallyladenosine(37) in tRNA + (sulfur carrier)-SH + AH2 + 2 S-adenosyl-L-methionine = 2-methylsulfanyl-N(6)-dimethylallyladenosine(37) in tRNA + (sulfur carrier)-H + 5'-deoxyadenosine + L-methionine + A + S-adenosyl-L-homocysteine + 2 H(+). In terms of biological role, catalyzes the methylthiolation of N6-(dimethylallyl)adenosine (i(6)A), leading to the formation of 2-methylthio-N6-(dimethylallyl)adenosine (ms(2)i(6)A) at position 37 in tRNAs that read codons beginning with uridine. This chain is tRNA-2-methylthio-N(6)-dimethylallyladenosine synthase, found in Cereibacter sphaeroides (strain ATCC 17023 / DSM 158 / JCM 6121 / CCUG 31486 / LMG 2827 / NBRC 12203 / NCIMB 8253 / ATH 2.4.1.) (Rhodobacter sphaeroides).